Reading from the N-terminus, the 355-residue chain is N-acetyl-gamma-glutamyl-phosphate reductase (355 aa).

Residue Cys152 is part of the active site.

This sequence belongs to the NAGSA dehydrogenase family. Type 1 subfamily.

The protein localises to the cytoplasm. The catalysed reaction is N-acetyl-L-glutamate 5-semialdehyde + phosphate + NADP(+) = N-acetyl-L-glutamyl 5-phosphate + NADPH + H(+). The protein operates within amino-acid biosynthesis; L-arginine biosynthesis; N(2)-acetyl-L-ornithine from L-glutamate: step 3/4. In terms of biological role, catalyzes the NADPH-dependent reduction of N-acetyl-5-glutamyl phosphate to yield N-acetyl-L-glutamate 5-semialdehyde. This chain is N-acetyl-gamma-glutamyl-phosphate reductase, found in Psychrobacter sp. (strain PRwf-1).